The primary structure comprises 2472 residues: Spectrin alpha chain, non-erythrocytic 1 (2472 aa).

Methionine 1 carries the N-acetylmethionine modification. 9 Spectrin repeats span residues 45–146 (RFQF…IKLL), 150–251 (KLVQ…QGKL), 256–358 (EVQR…ARLD), 361–465 (YRLQ…QYEQ), 468–570 (DLQL…AQLA), 574–676 (HLQQ…KLRE), 679–781 (QQQQ…QKLA), 785–888 (RLQQ…DLED), and 891–961 (QAQQ…QQVA). Serine 587 carries the phosphoserine modification. Lysine 637 carries the N6-acetyllysine modification. Lysine 803 is subject to N6-acetyllysine. Residues serine 924, serine 982, serine 999, serine 1029, serine 1031, and serine 1041 each carry the phosphoserine modification. Positions 967-1026 (TGKELVLALYDYQEKSPREVTMKKGDILTLLNSTNKDWWKVEVNDRQGFVPAAYVKKLDP) constitute an SH3 domain. The Spectrin 10 repeat unit spans residues 1096 to 1166 (LFREANELQQ…LESEGLMAEE (71 aa)). Tyrosine 1176 carries the post-translational modification Phosphotyrosine. Serine 1190, serine 1207, serine 1217, serine 1291, serine 1306, serine 1323, and serine 1338 each carry phosphoserine. One copy of the Spectrin 11 repeat lies at 1233–1336 (HEVQRFHRDA…RADQRKAKLG (104 aa)). Spectrin repeat units follow at residues 1339–1441 (HDLQ…RMML) and 1446–1549 (ELQL…KLGE). Lysine 1519 carries the post-translational modification N6-acetyllysine. A phosphoserine mark is found at serine 1550, serine 1557, serine 1578, serine 1615, and serine 1647. 7 Spectrin repeats span residues 1552–1656 (TLQQ…KLKE), 1659–1762 (KQQN…KLSE), 1764–1868 (HRLH…RLEE), 1871–1974 (EYQQ…KLDE), 1978–2081 (FLQF…KLLE), 2092–2194 (LFLT…LELQ), and 2206–2310 (LRQE…NLEQ). Threonine 2020 carries the post-translational modification Phosphothreonine. At lysine 2052 the chain carries N6-acetyllysine. At threonine 2066 the chain carries Phosphothreonine. EF-hand domains are found at residues 2323-2358 (EALK…LGYD), 2366-2401 (EPDP…RETE), and 2404-2439 (KSSE…EQAD). Positions 2336, 2338, 2340, 2342, 2347, 2379, 2381, 2383, 2385, and 2390 each coordinate Ca(2+). Residue lysine 2421 is modified to N6-acetyllysine.

This sequence belongs to the spectrin family. In terms of assembly, like erythrocyte spectrin, the spectrin-like proteins are capable of forming dimers which can further associate to tetramers. Interacts (via C-terminal spectrin repeats) with TRPC4. Interacts with CALM and EMD. Interacts with isoform 1 of ACP1. Identified in a complex with ACTN4, CASK, IQGAP1, MAGI2, NPHS1 and SPTBN1. Interacts with SHANK3 (via ANK repeats). Interacts with CLN3; this interaction regulates the fodrin localization at the plasma membrane. Post-translationally, phosphorylation of Tyr-1176 decreases sensitivity to cleavage by calpain in vitro. As to expression, expressed in the foot process layer of podocytes in the kidney glomerulus and in tubules (at protein level).

The protein resides in the cytoplasm. Its subcellular location is the cytoskeleton. The protein localises to the cell cortex. In terms of biological role, fodrin, which seems to be involved in secretion, interacts with calmodulin in a calcium-dependent manner and is thus candidate for the calcium-dependent movement of the cytoskeleton at the membrane. The polypeptide is Spectrin alpha chain, non-erythrocytic 1 (Sptan1) (Rattus norvegicus (Rat)).